We begin with the raw amino-acid sequence, 243 residues long: tRNA (guanine-N(7)-)-methyltransferase (243 aa).

4 residues coordinate S-adenosyl-L-methionine: E74, E99, D126, and D149. The active site involves D149. Residues K153, D185, and 221 to 224 each bind substrate; that span reads TKFE.

It belongs to the class I-like SAM-binding methyltransferase superfamily. TrmB family.

The enzyme catalyses guanosine(46) in tRNA + S-adenosyl-L-methionine = N(7)-methylguanosine(46) in tRNA + S-adenosyl-L-homocysteine. It participates in tRNA modification; N(7)-methylguanine-tRNA biosynthesis. Functionally, catalyzes the formation of N(7)-methylguanine at position 46 (m7G46) in tRNA. The sequence is that of tRNA (guanine-N(7)-)-methyltransferase from Psychromonas ingrahamii (strain DSM 17664 / CCUG 51855 / 37).